We begin with the raw amino-acid sequence, 113 residues long: Protein NATD1 (113 aa).

One can recognise an N-acetyltransferase domain in the interval glutamate 22 to glutamine 112.

It belongs to the NATD1 family.

This Homo sapiens (Human) protein is Protein NATD1 (NATD1).